The chain runs to 141 residues: General odorant-binding protein 57b (141 aa).

The signal sequence occupies residues 1–22; sequence MFIYRLVFIAPLILLLFSLAKA. 3 disulfide bridges follow: cysteine 39–cysteine 77, cysteine 73–cysteine 120, and cysteine 111–cysteine 129.

Belongs to the PBP/GOBP family.

Functionally, present in the aqueous fluid surrounding olfactory sensory dendrites and are thought to aid in the capture and transport of hydrophobic odorants into and through this fluid. The protein is General odorant-binding protein 57b of Drosophila melanogaster (Fruit fly).